Reading from the N-terminus, the 349-residue chain is Histone-lysine N-methyltransferase ATXR6 (349 aa).

Residues 1–28 form a disordered region; it reads MVAVRRRRTQASNPRSEPPQHMSDHDSD. Residues 32–82 form a PHD-type zinc finger; sequence DTVCEECSSGKQPAKLLLCDKCDKGFHLFCLRPILVSVPKGSWFCPSCSKH. A PIP motif motif is present at residues 92–99; it reads QTKIIDFF. A disordered region spans residues 105 to 126; it reads PDSSQISSSSDSIGKKRKKTSL. Low complexity predominate over residues 106 to 116; it reads DSSQISSSSDS. Residue Met190 participates in substrate binding. Residues 214–337 enclose the SET domain; it reads PPLMVVFDPY…KGERLYYDYN (124 aa). Residues 224-226 and 287-291 contribute to the S-adenosyl-L-methionine site; these read EGF and RFISG. Residues Arg309 and 339–340 contribute to the substrate site; that span reads YE. The S-adenosyl-L-methionine site is built by Tyr343 and Val349.

It belongs to the class V-like SAM-binding methyltransferase superfamily. Histone-lysine methyltransferase family. TRX/MLL subfamily. Interacts with PCNA1 and PCNA2. Interacts (via PHD domain) with HTR1 (via N-terminus). Interacts with IPS1. As to expression, expressed in leaves, roots, stems, flowers and siliques. Up-regulated in tissues where cell division is active.

The protein localises to the nucleus. The catalysed reaction is L-lysyl(27)-[histone H3] + S-adenosyl-L-methionine = N(6)-methyl-L-lysyl(27)-[histone H3] + S-adenosyl-L-homocysteine + H(+). Histone methyltransferase that specifically monomethylates 'Lys-27' of histone H3 (H3K27me1). Has higher activity on nucleosomes containing H3.1 than H3.3. Involved in the formation of constitutive heterochromatin and the silencing of heterochromatic elements. May act as a positive regulator of the G1-S transition. Influences which sets of rRNA gene variants are expressed or silenced. Up-regulated by E2FB. This chain is Histone-lysine N-methyltransferase ATXR6 (ATXR6), found in Arabidopsis thaliana (Mouse-ear cress).